Here is a 215-residue protein sequence, read N- to C-terminus: Ribose-5-phosphate isomerase A (215 aa).

Residues 26-29, 79-82, and 92-95 contribute to the substrate site; these read TGST, DGAD, and KGGG. Catalysis depends on Glu101, which acts as the Proton acceptor. Residue Lys119 participates in substrate binding.

Belongs to the ribose 5-phosphate isomerase family. Homodimer.

The catalysed reaction is aldehydo-D-ribose 5-phosphate = D-ribulose 5-phosphate. It participates in carbohydrate degradation; pentose phosphate pathway; D-ribose 5-phosphate from D-ribulose 5-phosphate (non-oxidative stage): step 1/1. Functionally, catalyzes the reversible conversion of ribose-5-phosphate to ribulose 5-phosphate. This is Ribose-5-phosphate isomerase A from Xanthomonas oryzae pv. oryzae (strain PXO99A).